Consider the following 140-residue polypeptide: Nucleoside diphosphate kinase (140 aa).

Residues K11, F59, R87, T93, R104, and N114 each coordinate ATP. H117 functions as the Pros-phosphohistidine intermediate in the catalytic mechanism.

It belongs to the NDK family. Homotetramer. The cofactor is Mg(2+).

The protein localises to the cytoplasm. It catalyses the reaction a 2'-deoxyribonucleoside 5'-diphosphate + ATP = a 2'-deoxyribonucleoside 5'-triphosphate + ADP. The enzyme catalyses a ribonucleoside 5'-diphosphate + ATP = a ribonucleoside 5'-triphosphate + ADP. In terms of biological role, major role in the synthesis of nucleoside triphosphates other than ATP. The ATP gamma phosphate is transferred to the NDP beta phosphate via a ping-pong mechanism, using a phosphorylated active-site intermediate. The protein is Nucleoside diphosphate kinase of Granulibacter bethesdensis (strain ATCC BAA-1260 / CGDNIH1).